The primary structure comprises 336 residues: Cytoskeleton protein RodZ (336 aa).

Over 1-111 (MNTEATHDQN…LGKRRKKRDG (111 aa)) the chain is Cytoplasmic. The HTH cro/C1-type domain occupies 19–71 (LRNAREQLGLSQQAVAERLCLKVSTVRDIEEDKAPSDLASTFLRGYIRSYARL). Residues 30-49 (QQAVAERLCLKVSTVRDIEE) constitute a DNA-binding region (H-T-H motif). The helical; Signal-anchor for type II membrane protein transmembrane segment at 112-132 (WLMSFTWLVLFVVVGLTGAWW) threads the bilayer. Residues 133–336 (WQNHKAQQEE…TLNAEPTPAQ (204 aa)) lie on the Periplasmic side of the membrane. Positions 155 to 243 (NADKDSGQSV…PSALPTSQAG (89 aa)) are disordered. Positions 161-175 (GQSVPLDTGAVTSQD) are enriched in polar residues. 2 stretches are compositionally biased toward low complexity: residues 176–214 (TTPA…VVAP) and 221–243 (TAAT…SQAG).

The protein belongs to the RodZ family.

The protein resides in the cell inner membrane. Functionally, cytoskeletal protein that is involved in cell-shape control through regulation of the length of the long axis. The polypeptide is Cytoskeleton protein RodZ (Salmonella newport (strain SL254)).